Reading from the N-terminus, the 1404-residue chain is Microtubule organization protein AKNA (1404 aa).

Disordered stretches follow at residues 1–304 (MASS…VSPL) and 317–382 (QHKQ…RPLI). Serine 51 bears the Phosphoserine mark. The span at 70 to 91 (WDPDMQDSEESSGEETEADDAS) shows a compositional bias: acidic residues. Over residues 185-203 (KSWSSGTVSLRQPSDSLGS) the composition is skewed to polar residues. Serine 302 carries the phosphoserine modification. Phosphoserine is present on residues serine 485 and serine 520. The tract at residues 494–549 (AEWWPDPAQDPQASEATGWPFPRTDLSPSSSPGVATPGRLPQSQGIATDQPSTGQT) is disordered. Residues 534-549 (PQSQGIATDQPSTGQT) show a composition bias toward polar residues. Serine 617 bears the Phosphoserine mark. The segment covering 645–659 (MDQTQRETEPCRPDL) has biased composition (basic and acidic residues). The interval 645–708 (MDQTQRETEP…TSPGSSCTLP (64 aa)) is disordered. Composition is skewed to polar residues over residues 660-674 (QDST…QSAH) and 686-707 (DGQT…SCTL). 2 positions are modified to phosphoserine: serine 750 and serine 753. The tract at residues 754-787 (LPEALRDEDEDDLEEEEEEQDHQGPLEVDSPATA) is PEST. Disordered stretches follow at residues 755–1038 (PEAL…STAN) and 1085–1185 (HSTQ…RERV). A compositionally biased stretch (acidic residues) spans 759 to 773 (RDEDEDDLEEEEEEQ). Basic and acidic residues predominate over residues 803-813 (TQAEESHRDAT). Phosphoserine is present on residues serine 831 and serine 860. The segment at 885–906 (HTEEPWMVSPETDSGFVGSETS) is PEST. Composition is skewed to polar residues over residues 903-914 (SETSIVSPFTQT), 921-933 (HVST…QHLT), and 963-974 (SRTQQHFSSLSS). Serine 971 is modified (phosphoserine). Low complexity predominate over residues 1015–1029 (TSPDSAPAPTAASTP). Residues 1085 to 1098 (HSTQTQEKLGSSPS) show a composition bias toward polar residues. The a.T hook DNA-binding region spans 1088 to 1096 (QTQEKLGSS). A phosphoserine mark is found at serine 1144 and serine 1145. The span at 1155 to 1167 (SSEKSRTFEEHPE) shows a compositional bias: basic and acidic residues. Phosphoserine is present on serine 1200. 2 disordered regions span residues 1208-1235 (SGTP…TTRG) and 1253-1286 (SAEA…QTGS). Polar residues predominate over residues 1221-1235 (TQDTGSAVSRDTTRG). 3 positions are modified to phosphoserine: serine 1339, serine 1352, and serine 1389.

Belongs to the AKNA family. In terms of assembly, interacts with DCTN1. Interacts with MAPRE1/EB1. Interacts with ODF2. Interacts with CAMSAP3. Phosphorylated; phosphorylation regulates dissociation from and reassembly at the centrosome. In terms of tissue distribution, expressed in neural stem cells isolated at the peak of subventricular zone (SVZ): localizes at the subdistal appendages of the mother centriole in specific subtypes of neural stem cells and in almost all basal progenitors.

Its subcellular location is the cytoplasm. The protein resides in the cytoskeleton. The protein localises to the microtubule organizing center. It is found in the centrosome. It localises to the centriole. Its subcellular location is the nucleus. Its function is as follows. Centrosomal protein that plays a key role in cell delamination by regulating microtubule organization. Required for the delamination and retention of neural stem cells from the subventricular zone during neurogenesis. Also regulates the epithelial-to-mesenchymal transition in other epithelial cells. Acts by increasing centrosomal microtubule nucleation and recruiting nucleation factors and minus-end stabilizers, thereby destabilizing microtubules at the adherens junctions and mediating constriction of the apical endfoot. In addition, may also act as a transcription factor that specifically activates the expression of the CD40 receptor and its ligand CD40L/CD154, two cell surface molecules on lymphocytes that are critical for antigen-dependent-B-cell development. Binds to A/T-rich promoters. It is unclear how it can both act as a microtubule organizer and as a transcription factor; additional evidences are required to reconcile these two apparently contradictory functions. The polypeptide is Microtubule organization protein AKNA (Mus musculus (Mouse)).